The following is a 71-amino-acid chain: Brevinin-1CG4 (71 aa).

An N-terminal signal peptide occupies residues Met1–Cys22. A propeptide spans Glu23 to Glu45 (removed in mature form). A disulfide bridge links Cys65 with Cys71.

Belongs to the frog skin active peptide (FSAP) family. Brevinin subfamily. As to expression, expressed by the skin glands.

The protein localises to the secreted. Functionally, antimicrobial peptide active against a variety of Gram-positive and some Gram-negative bacterial strains. Has antifungal activity against C.albicans ATCC 10231 and a slime mold isolate. Has hemolytic activity against human erythrocytes. The protein is Brevinin-1CG4 of Amolops chunganensis (Chungan torrent frog).